A 193-amino-acid chain; its full sequence is Adenylate kinase (193 aa).

Position 10-18 (10-18 (GVPGVGGTT)) interacts with ATP.

It belongs to the archaeal adenylate kinase family. As to quaternary structure, monomer.

The protein resides in the cytoplasm. It catalyses the reaction AMP + ATP = 2 ADP. The protein is Adenylate kinase of Methanococcus aeolicus (strain ATCC BAA-1280 / DSM 17508 / OCM 812 / Nankai-3).